We begin with the raw amino-acid sequence, 284 residues long: Ribosomal RNA small subunit methyltransferase A (284 aa).

Positions 26, 28, 53, 74, 97, and 127 each coordinate S-adenosyl-L-methionine.

This sequence belongs to the class I-like SAM-binding methyltransferase superfamily. rRNA adenine N(6)-methyltransferase family. RsmA subfamily.

Its subcellular location is the cytoplasm. The catalysed reaction is adenosine(1518)/adenosine(1519) in 16S rRNA + 4 S-adenosyl-L-methionine = N(6)-dimethyladenosine(1518)/N(6)-dimethyladenosine(1519) in 16S rRNA + 4 S-adenosyl-L-homocysteine + 4 H(+). Its function is as follows. Specifically dimethylates two adjacent adenosines (A1518 and A1519) in the loop of a conserved hairpin near the 3'-end of 16S rRNA in the 30S particle. May play a critical role in biogenesis of 30S subunits. The chain is Ribosomal RNA small subunit methyltransferase A from Anaeromyxobacter dehalogenans (strain 2CP-1 / ATCC BAA-258).